Here is a 184-residue protein sequence, read N- to C-terminus: Luciferin-binding protein (184 aa).

EF-hand domains lie at 10-45, 46-81, 98-133, and 134-169; these read YHLR…IAKI, AKLS…EEAA, MAVI…VGPD, and ITDD…FLFG. Ca(2+) contacts are provided by D111, D113, D115, Y117, E122, D147, N149, N151, Q153, and E158.

Its function is as follows. This Ca(2+)-dependent protein binds to luciferin. The luciferin of LBP is capable of reacting with luciferase and O(2) only when calcium is bound. The polypeptide is Luciferin-binding protein (Renilla reniformis (Sea pansy)).